A 370-amino-acid polypeptide reads, in one-letter code: Dual-specificity RNA methyltransferase RlmN (370 aa).

E93 acts as the Proton acceptor in catalysis. The 233-residue stretch at D99–D331 folds into the Radical SAM core domain. C106 and C336 are joined by a disulfide. The [4Fe-4S] cluster site is built by C113, C117, and C120. Residues G162–E163, S194, S216–H218, and N293 contribute to the S-adenosyl-L-methionine site. C336 serves as the catalytic S-methylcysteine intermediate.

It belongs to the radical SAM superfamily. RlmN family. It depends on [4Fe-4S] cluster as a cofactor.

It is found in the cytoplasm. The enzyme catalyses adenosine(2503) in 23S rRNA + 2 reduced [2Fe-2S]-[ferredoxin] + 2 S-adenosyl-L-methionine = 2-methyladenosine(2503) in 23S rRNA + 5'-deoxyadenosine + L-methionine + 2 oxidized [2Fe-2S]-[ferredoxin] + S-adenosyl-L-homocysteine. The catalysed reaction is adenosine(37) in tRNA + 2 reduced [2Fe-2S]-[ferredoxin] + 2 S-adenosyl-L-methionine = 2-methyladenosine(37) in tRNA + 5'-deoxyadenosine + L-methionine + 2 oxidized [2Fe-2S]-[ferredoxin] + S-adenosyl-L-homocysteine. In terms of biological role, specifically methylates position 2 of adenine 2503 in 23S rRNA and position 2 of adenine 37 in tRNAs. m2A2503 modification seems to play a crucial role in the proofreading step occurring at the peptidyl transferase center and thus would serve to optimize ribosomal fidelity. In Coxiella burnetii (strain RSA 493 / Nine Mile phase I), this protein is Dual-specificity RNA methyltransferase RlmN.